We begin with the raw amino-acid sequence, 403 residues long: UPF0229 protein CKR_0568 (403 aa).

The disordered stretch occupies residues 71–109 (SSGVGSGDGSQKKGDRIGKAIKDRDGKGNQGAGNQEGED). The span at 80-97 (SQKKGDRIGKAIKDRDGK) shows a compositional bias: basic and acidic residues.

It belongs to the UPF0229 family.

This Clostridium kluyveri (strain NBRC 12016) protein is UPF0229 protein CKR_0568.